The chain runs to 729 residues: Phosphoribosylformylglycinamidine synthase subunit PurL (729 aa).

H54 is a catalytic residue. Residues Y57 and K96 each contribute to the ATP site. Residue E98 coordinates Mg(2+). Residues 99–102 and R121 each bind substrate; that span reads SHNH. The active-site Proton acceptor is H100. Residue D122 participates in Mg(2+) binding. Residue Q245 participates in substrate binding. Position 273 (D273) interacts with Mg(2+). Residue 317–319 coordinates substrate; sequence ETQ. Positions 495 and 532 each coordinate ATP. A Mg(2+)-binding site is contributed by N533. S535 contacts substrate.

This sequence belongs to the FGAMS family. Monomer. Part of the FGAM synthase complex composed of 1 PurL, 1 PurQ and 2 PurS subunits.

Its subcellular location is the cytoplasm. The catalysed reaction is N(2)-formyl-N(1)-(5-phospho-beta-D-ribosyl)glycinamide + L-glutamine + ATP + H2O = 2-formamido-N(1)-(5-O-phospho-beta-D-ribosyl)acetamidine + L-glutamate + ADP + phosphate + H(+). It functions in the pathway purine metabolism; IMP biosynthesis via de novo pathway; 5-amino-1-(5-phospho-D-ribosyl)imidazole from N(2)-formyl-N(1)-(5-phospho-D-ribosyl)glycinamide: step 1/2. Its function is as follows. Part of the phosphoribosylformylglycinamidine synthase complex involved in the purines biosynthetic pathway. Catalyzes the ATP-dependent conversion of formylglycinamide ribonucleotide (FGAR) and glutamine to yield formylglycinamidine ribonucleotide (FGAM) and glutamate. The FGAM synthase complex is composed of three subunits. PurQ produces an ammonia molecule by converting glutamine to glutamate. PurL transfers the ammonia molecule to FGAR to form FGAM in an ATP-dependent manner. PurS interacts with PurQ and PurL and is thought to assist in the transfer of the ammonia molecule from PurQ to PurL. The sequence is that of Phosphoribosylformylglycinamidine synthase subunit PurL from Staphylococcus saprophyticus subsp. saprophyticus (strain ATCC 15305 / DSM 20229 / NCIMB 8711 / NCTC 7292 / S-41).